The sequence spans 117 residues: DNA-directed RNA polymerase subunit omega (117 aa).

It belongs to the RNA polymerase subunit omega family. In terms of assembly, the RNAP catalytic core consists of 2 alpha, 1 beta, 1 beta' and 1 omega subunit. When a sigma factor is associated with the core the holoenzyme is formed, which can initiate transcription.

It catalyses the reaction RNA(n) + a ribonucleoside 5'-triphosphate = RNA(n+1) + diphosphate. Functionally, promotes RNA polymerase assembly. Latches the N- and C-terminal regions of the beta' subunit thereby facilitating its interaction with the beta and alpha subunits. The protein is DNA-directed RNA polymerase subunit omega of Ruegeria pomeroyi (strain ATCC 700808 / DSM 15171 / DSS-3) (Silicibacter pomeroyi).